The sequence spans 208 residues: GTP cyclohydrolase 1 (208 aa).

Positions 89, 92, and 163 each coordinate Zn(2+).

This sequence belongs to the GTP cyclohydrolase I family. Homomer.

It carries out the reaction GTP + H2O = 7,8-dihydroneopterin 3'-triphosphate + formate + H(+). The protein operates within cofactor biosynthesis; 7,8-dihydroneopterin triphosphate biosynthesis; 7,8-dihydroneopterin triphosphate from GTP: step 1/1. The chain is GTP cyclohydrolase 1 from Saccharolobus islandicus (strain Y.N.15.51 / Yellowstone #2) (Sulfolobus islandicus).